Consider the following 540-residue polypeptide: Beta-glucosidase 1B (540 aa).

Substrate is bound by residues glutamine 25, histidine 128, and asparagine 174. Glutamate 175 functions as the Proton donor in the catalytic mechanism. Position 316 (tyrosine 316) interacts with substrate. The active-site Nucleophile is the glutamate 380. Substrate-binding positions include tryptophan 430 and 437-438 (EW). Low complexity predominate over residues 481–492 (PAAETKKAATPS). The tract at residues 481–524 (PAAETKKAATPSPLKPHGAISNGVSKKSSATKEPKSASRKKGRK) is disordered.

The protein belongs to the glycosyl hydrolase 1 family.

It catalyses the reaction Hydrolysis of terminal, non-reducing beta-D-glucosyl residues with release of beta-D-glucose.. In terms of biological role, plays an important role in cellulose degradation. Shows hydrolytic activity against several glycosidic compounds. In Phanerodontia chrysosporium (White-rot fungus), this protein is Beta-glucosidase 1B.